The chain runs to 239 residues: MGLGKTEWEDIQIKYGNMEAPPKQLTEDELFDLIKEAAEMATEAEKNEKLENASLKDLKDMEDDEDEDVLEQLRKKRIQQMKVEAELNKFGELKEISEPSYKSEVTECKGVMVVVHLFKNGIPQCQLVNQHLTILAKKFKATKFVKIRSEEAIHNYPDKNLPTILVYFNGDIVGQIITLRATGGDATTVNDIEWQLKQAHAIKSDLQEDPRITLARKKSQKSRYSKADSDESDNSDSDD.

The stretch at 26–87 (TEDELFDLIK…IQQMKVEAEL (62 aa)) forms a coiled coil. The 161-residue stretch at 36 to 196 (EAAEMATEAE…TTVNDIEWQL (161 aa)) folds into the Phosducin domain. Basic and acidic residues predominate over residues 42 to 59 (TEAEKNEKLENASLKDLK). Disordered stretches follow at residues 42–64 (TEAE…MEDD) and 212–239 (ITLA…DSDD). The thioredoxin fold stretch occupies residues 90 to 239 (FGELKEISEP…DESDNSDSDD (150 aa)). Basic residues predominate over residues 214–224 (LARKKSQKSRY). Residues 230 to 239 (DESDNSDSDD) are compositionally biased toward acidic residues.

Belongs to the phosducin family.

This is Phosducin-like protein 2 (phlp2) from Dictyostelium discoideum (Social amoeba).